A 628-amino-acid polypeptide reads, in one-letter code: Cytoplasmic dynein 1 intermediate chain 1 (628 aa).

2 stretches are compositionally biased toward basic and acidic residues: residues 1–13 (MSDKSDLKAELER) and 20–60 (QIRE…RETE). The segment at 1 to 114 (MSDKSDLKAE…RTLQWDTDPS (114 aa)) is disordered. Ser2 carries the post-translational modification N-acetylserine. Phosphoserine is present on Ser50. Residues 70-79 (PEPPLVPTPM) show a composition bias toward pro residues. The segment covering 80-90 (SPSSKSVSTPS) has biased composition (low complexity). A Phosphoserine modification is found at Ser83. The residue at position 88 (Thr88) is a Phosphothreonine. Phosphoserine occurs at positions 90, 94, and 97. A compositionally biased stretch (polar residues) spans 105–114 (RTLQWDTDPS). Positions 130–146 (KLGVSKVTQVDFLPREV) are interaction with DYNLT1. A disordered region spans residues 152–204 (ETQTPLATHQSEEDEEDEEMVEPKIGHDSELENQEKKQETKEAPPRELTEEEK). Phosphothreonine is present on Thr159. Phosphoserine is present on residues Ser162 and Ser180. Residues 172 to 204 (VEPKIGHDSELENQEKKQETKEAPPRELTEEEK) show a composition bias toward basic and acidic residues. 7 WD repeats span residues 268–317 (SKHR…TTPE), 321–361 (HCQS…RTPV), 370–411 (AHTH…TPQE), 420–460 (SKPV…AGIG), 465–510 (GHQG…PLYS), 513–553 (DNAD…EVPT), and 559–598 (EGASALNRVRWAQGGKEVAVGDSEGRIWIYDVGELAVPHN). Ser618 bears the Phosphoserine mark.

Belongs to the dynein intermediate chain family. In terms of assembly, homodimer. The cytoplasmic dynein 1 complex consists of two catalytic heavy chains (HCs) and a number of non-catalytic subunits presented by intermediate chains (ICs), light intermediate chains (LICs) and light chains (LCs); the composition seems to vary in respect to the IC, LIC and LC composition. The heavy chain homodimer serves as a scaffold for the probable homodimeric assembly of the respective non-catalytic subunits. The ICs and LICs bind directly to the HC dimer and the LCs assemble on the IC dimer. Interacts with DYNC1H1. Interacts with DYNLT1 and DYNLT3. Interacts with DCTN1. Interacts with DYNLL2. Interacts with MCRS1; the interaction is required for the proper distribution of centriolar satellites.

The protein resides in the cytoplasm. It is found in the chromosome. Its subcellular location is the centromere. The protein localises to the kinetochore. It localises to the cytoskeleton. The protein resides in the spindle pole. Functionally, acts as one of several non-catalytic accessory components of the cytoplasmic dynein 1 complex that are thought to be involved in linking dynein to cargos and to adapter proteins that regulate dynein function. Cytoplasmic dynein 1 acts as a motor for the intracellular retrograde motility of vesicles and organelles along microtubules. The intermediate chains mediate the binding of dynein to dynactin via its 150 kDa component (p150-glued) DCTN1. May play a role in mediating the interaction of cytoplasmic dynein with membranous organelles and kinetochores. The protein is Cytoplasmic dynein 1 intermediate chain 1 (Dync1i1) of Mus musculus (Mouse).